The primary structure comprises 90 residues: Translation initiation factor IF-1 (90 aa).

The region spanning 7–76 (KEDVIRMEGT…TRGRIVYRKK (70 aa)) is the S1-like domain.

This sequence belongs to the IF-1 family. In terms of assembly, component of the 30S ribosomal translation pre-initiation complex which assembles on the 30S ribosome in the order IF-2 and IF-3, IF-1 and N-formylmethionyl-tRNA(fMet); mRNA recruitment can occur at any time during PIC assembly.

The protein resides in the cytoplasm. Functionally, one of the essential components for the initiation of protein synthesis. Stabilizes the binding of IF-2 and IF-3 on the 30S subunit to which N-formylmethionyl-tRNA(fMet) subsequently binds. Helps modulate mRNA selection, yielding the 30S pre-initiation complex (PIC). Upon addition of the 50S ribosomal subunit IF-1, IF-2 and IF-3 are released leaving the mature 70S translation initiation complex. The chain is Translation initiation factor IF-1 from Fervidobacterium nodosum (strain ATCC 35602 / DSM 5306 / Rt17-B1).